Here is an 85-residue protein sequence, read N- to C-terminus: uncharacterized protein (85 aa).

This is an uncharacterized protein from Saimiriine herpesvirus 2 (strain 488) (SaHV-2).